Reading from the N-terminus, the 120-residue chain is NAD(P)H-quinone oxidoreductase subunit 3, chloroplastic (120 aa).

A run of 3 helical transmembrane segments spans residues 9 to 29, 64 to 84, and 88 to 108; these read IFWAFLMISSVIPILAFLISG, MFALVFVVFDVETVFLYPWAV, and ILGVYVFIEALIFVLIPVVGS.

This sequence belongs to the complex I subunit 3 family. In terms of assembly, NDH is composed of at least 16 different subunits, 5 of which are encoded in the nucleus.

It localises to the plastid. Its subcellular location is the chloroplast thylakoid membrane. It carries out the reaction a plastoquinone + NADH + (n+1) H(+)(in) = a plastoquinol + NAD(+) + n H(+)(out). The enzyme catalyses a plastoquinone + NADPH + (n+1) H(+)(in) = a plastoquinol + NADP(+) + n H(+)(out). NDH shuttles electrons from NAD(P)H:plastoquinone, via FMN and iron-sulfur (Fe-S) centers, to quinones in the photosynthetic chain and possibly in a chloroplast respiratory chain. The immediate electron acceptor for the enzyme in this species is believed to be plastoquinone. Couples the redox reaction to proton translocation, and thus conserves the redox energy in a proton gradient. This is NAD(P)H-quinone oxidoreductase subunit 3, chloroplastic from Nymphaea alba (White water-lily).